The primary structure comprises 415 residues: YDG domain-containing protein At5g47160 (415 aa).

The segment at 163–186 (KKLSNASRLRANAHRPTQHKDERR) is disordered. The region spanning 262 to 407 (GSVPGIKVGD…NILFKFKLRR (146 aa)) is the YDG domain.

It is found in the nucleus. The polypeptide is YDG domain-containing protein At5g47160 (Arabidopsis thaliana (Mouse-ear cress)).